Reading from the N-terminus, the 352-residue chain is Beta-hexosaminidase (352 aa).

Substrate is bound by residues Asp74, Arg82, Arg149, and 179-180 (KH). His192 (proton donor/acceptor) is an active-site residue. Catalysis depends on Asp263, which acts as the Nucleophile.

This sequence belongs to the glycosyl hydrolase 3 family. NagZ subfamily.

It is found in the cytoplasm. The enzyme catalyses Hydrolysis of terminal non-reducing N-acetyl-D-hexosamine residues in N-acetyl-beta-D-hexosaminides.. The protein operates within cell wall biogenesis; peptidoglycan recycling. Its function is as follows. Plays a role in peptidoglycan recycling by cleaving the terminal beta-1,4-linked N-acetylglucosamine (GlcNAc) from peptide-linked peptidoglycan fragments, giving rise to free GlcNAc, anhydro-N-acetylmuramic acid and anhydro-N-acetylmuramic acid-linked peptides. In Bordetella pertussis (strain Tohama I / ATCC BAA-589 / NCTC 13251), this protein is Beta-hexosaminidase.